The following is a 302-amino-acid chain: HTH-type transcriptional regulator AlsR (302 aa).

The HTH lysR-type domain occupies 1–58; that stretch reads MELRHLQYFIAVAEELHFGKAARRLNMTQPPLSQQIKQLEEEVGVTLLKRTKRFVELT. Residues 18-37 constitute a DNA-binding region (H-T-H motif); the sequence is FGKAARRLNMTQPPLSQQIK.

Belongs to the LysR transcriptional regulatory family.

Its function is as follows. Regulates the expression of the alsSD operon for acetoin biosynthesis. The sequence is that of HTH-type transcriptional regulator AlsR (alsR) from Bacillus subtilis (strain 168).